A 239-amino-acid chain; its full sequence is DNA repair protein RecO (239 aa).

It belongs to the RecO family.

Involved in DNA repair and RecF pathway recombination. This Christiangramia forsetii (strain DSM 17595 / CGMCC 1.15422 / KT0803) (Gramella forsetii) protein is DNA repair protein RecO.